The sequence spans 290 residues: Programmed cell death 1 ligand 1 (290 aa).

A signal peptide spans 1 to 18 (MRIFAGIIFTACCHLLRA). Residues 19–127 (FTITAPKDLY…YGGADYKRIT (109 aa)) form the Ig-like V-type domain. Residues 19–239 (FTITAPKDLY…ATHPPQNRTH (221 aa)) lie on the Extracellular side of the membrane. N-linked (GlcNAc...) asparagine glycosylation occurs at Asn35. Cystine bridges form between Cys40–Cys114 and Cys154–Cys208. The Ig-like C2-type domain occupies 133 to 224 (PYRKINQRIS…PGQNHTAELI (92 aa)). N-linked (GlcNAc...) asparagine glycosylation is found at Asn191, Asn199, Asn218, and Asn236. Residues 240-260 (WVLLGSILLFLIVVSTVLLFL) form a helical membrane-spanning segment. The Cytoplasmic portion of the chain corresponds to 261-290 (RKQVRMLDVEKCGVEDTSSKNRNDTQFEET).

This sequence belongs to the immunoglobulin superfamily. BTN/MOG family. In terms of assembly, interacts with PDCD1. Interacts with CMTM4 and CMTM6. Interacts with CD80. Post-translationally, ubiquitinated; STUB1 likely mediates polyubiquitination of PD-L1/CD274 triggering its degradation. Ubiquitinated by MARCHF8; leading to degradation. Deubiquitinated by USP22; leading to stabilization. Highly expressed in the heart, thymus, skeletal muscle, and lung. Weakly expressed in the kidney, spleen, thyroid, and liver. Expressed on activated dendritic cells, B-cells and macrophages. Expressed in numerous tumor cells lines of lymphoid origin.

The protein localises to the cell membrane. It is found in the early endosome membrane. It localises to the recycling endosome membrane. In terms of biological role, plays a critical role in induction and maintenance of immune tolerance to self. As a ligand for the inhibitory receptor PDCD1/PD-1, modulates the activation threshold of T-cells and limits T-cell effector response. Through a yet unknown activating receptor, may costimulate T-cell subsets that predominantly produce interleukin-10 (IL10). Its function is as follows. The PDCD1-mediated inhibitory pathway is exploited by tumors to attenuate anti-tumor immunity and escape destruction by the immune system, thereby facilitating tumor survival. The interaction with PDCD1/PD-1 inhibits cytotoxic T lymphocytes (CTLs) effector function. The blockage of the PDCD1-mediated pathway results in the reversal of the exhausted T-cell phenotype and the normalization of the anti-tumor response, providing a rationale for cancer immunotherapy. In Mus musculus (Mouse), this protein is Programmed cell death 1 ligand 1 (Cd274).